Here is a 97-residue protein sequence, read N- to C-terminus: Citrate lyase acyl carrier protein (97 aa).

Serine 14 bears the O-(phosphoribosyl dephospho-coenzyme A)serine mark.

The protein belongs to the CitD family. As to quaternary structure, oligomer with a subunit composition of (alpha,beta,gamma)6.

Its subcellular location is the cytoplasm. Its function is as follows. Covalent carrier of the coenzyme of citrate lyase. The sequence is that of Citrate lyase acyl carrier protein from Lactobacillus helveticus (strain DPC 4571).